We begin with the raw amino-acid sequence, 157 residues long: Protein snakeskin (157 aa).

Over 2–6 (VSVQT) the chain is Cytoplasmic. A helical transmembrane segment spans residues 7–27 (IATIVVKTFKIVLNIIILVLY). Over 28-53 (RTGYNGEFLGVGGTWNLNEEKNPDAE) the chain is Extracellular. Residues 54–74 (IVASGVIVGYLIYTLVQIVTF) form a helical membrane-spanning segment. Residues 75–87 (LFGTTEHKRALSE) lie on the Cytoplasmic side of the membrane. A helical transmembrane segment spans residues 88-108 (IVMNFVGVFLWIAVGAVALHY). The Extracellular portion of the chain corresponds to 109-130 (WGGYQGEHQFQFVFAEKQVGLA). A helical membrane pass occupies residues 131-151 (VGALCVINGAIYLLDTALSVI). Residues 152-157 (HFTKEM) lie on the Cytoplasmic side of the membrane.

In terms of tissue distribution, expressed in midgut epithelium (at protein level).

It is found in the apicolateral cell membrane. The protein resides in the cell junction. The protein localises to the septate junction. Its function is as follows. Required for assembly of smooth septate junctions (sSJs). May be important for barrier function of the midgut epithelium. The polypeptide is Protein snakeskin (Bombyx mori (Silk moth)).